The sequence spans 223 residues: Neurotrophic factor BDNF precursor form (223 aa).

The N-terminal stretch at 1-5 is a signal peptide; sequence SCMKA. Positions 6–114 are excised as a propeptide; the sequence is APMKEVSIRG…AANMSMRVRR (109 aa). Residue Asn-107 is glycosylated (N-linked (GlcNAc...) asparagine). Cystine bridges form between Cys-127–Cys-194 and Cys-172–Cys-223.

Belongs to the NGF-beta family.

Its subcellular location is the secreted. In terms of biological role, promotes the survival of neuronal populations that are all located either in the central nervous system or directly connected to it. This is Neurotrophic factor BDNF precursor form (BDNF) from Boa constrictor (Boa).